The following is a 492-amino-acid chain: Histone-lysine N-methyltransferase ASHH1 (492 aa).

The AWS domain occupies 36–87 (EDISICECKFDFGDPDSACGERCLNVITNTECTPGYCPCGVYCKNQKFQKCE). One can recognise an SET domain in the interval 84–206 (QKCEYAKTKL…PRTELAYDYN (123 aa)). Residues 213–229 (AKVRCLCGAVACSGFLG) enclose the Post-SET domain. The disordered stretch occupies residues 259–340 (SAEDELTSEP…NSQEDSSPKT (82 aa)). Polar residues predominate over residues 266–275 (SEPSKNGESN). The segment covering 277–290 (NEEKEKDISTENHL) has biased composition (basic and acidic residues). Positions 291–306 (ESTALNIQQQSDSTPT) are enriched in polar residues. Positions 317 to 326 (VKTETSEDMK) are enriched in basic and acidic residues. Residues 328-339 (LSQNSQEDSSPK) are compositionally biased toward polar residues.

This sequence belongs to the class V-like SAM-binding methyltransferase superfamily. Histone-lysine methyltransferase family. SET2 subfamily.

The protein resides in the nucleus. The protein localises to the chromosome. It localises to the centromere. The catalysed reaction is L-lysyl(4)-[histone H3] + 3 S-adenosyl-L-methionine = N(6),N(6),N(6)-trimethyl-L-lysyl(4)-[histone H3] + 3 S-adenosyl-L-homocysteine + 3 H(+). In terms of biological role, histone methyltransferase involved in regulation of flowering time. Required for the expression of the SOC1/AGL20 gene. Required for histone H3 trimethylation on 'Lys-4' (H3K4me3) at the SOC1 locus. Prevents trimethylation on 'Lys-27' (H3K27me3) at the same locus. The sequence is that of Histone-lysine N-methyltransferase ASHH1 (ASHH1) from Arabidopsis thaliana (Mouse-ear cress).